The following is a 123-amino-acid chain: MASPGLGLLLALGLPLLPARWGRAWGQTLDPHVNENGTITPSAPGSGSNGALSQEAITAIIVVFSLLAAVLLAVGLVLLLRKLREKRQTQGTYRPSSEEQFNHAAEARAPQDSKETVRGCLPI.

Residues 1–26 (MASPGLGLLLALGLPLLPARWGRAWG) form the signal peptide. The Extracellular segment spans residues 27 to 59 (QTLDPHVNENGTITPSAPGSGSNGALSQEAITA). A glycan (N-linked (GlcNAc...) asparagine) is linked at N36. The chain crosses the membrane as a helical span at residues 60–80 (IIVVFSLLAAVLLAVGLVLLL). The Cytoplasmic portion of the chain corresponds to 81-120 (RKLREKRQTQGTYRPSSEEQFNHAAEARAPQDSKETVRGC). Residues 87-123 (RQTQGTYRPSSEEQFNHAAEARAPQDSKETVRGCLPI) form a disordered region. Over residues 96–117 (SSEEQFNHAAEARAPQDSKETV) the composition is skewed to basic and acidic residues. A PDZ-binding motif is present at residues 119–123 (GCLPI).

As to quaternary structure, component of a complex composed of CRB3, PALS1 and PATJ. Interacts (via C-terminus) with PALS1 (via PDZ domain). Interacts with PARD6A. Interacts (via intracellular domain) with EPB41L5. Interacts with WDR83.

The protein resides in the apical cell membrane. The protein localises to the cell junction. It localises to the tight junction. Functionally, involved in the establishment of cell polarity in mammalian epithelial cells. Regulates the morphogenesis of tight junctions. Involved in promoting phosphorylation and cytoplasmic retention of transcriptional coactivators YAP1 and WWTR1/TAZ which leads to suppression of TGFB1-dependent transcription of target genes such as CCN2/CTGF, SERPINE1/PAI1, SNAI1/SNAIL1 and SMAD7. This Canis lupus familiaris (Dog) protein is Protein crumbs homolog 3.